The following is a 304-amino-acid chain: Dermonecrotic toxin LlSicTox-betaIA1 (304 aa).

The signal sequence occupies residues 1 to 21 (MLLSAVISFIGFAAFLQEANG). Residues 22 to 26 (HVVER) constitute a propeptide that is removed on maturation. Residue H38 is part of the active site. Mg(2+) contacts are provided by E58 and D60. H74 functions as the Nucleophile in the catalytic mechanism. Intrachain disulfides connect C78–C84 and C80–C223. D118 serves as a coordination point for Mg(2+).

Belongs to the arthropod phospholipase D family. Class II subfamily. Class IIb sub-subfamily. Requires Mg(2+) as cofactor. Expressed by the venom gland.

The protein localises to the secreted. The catalysed reaction is an N-(acyl)-sphingosylphosphocholine = an N-(acyl)-sphingosyl-1,3-cyclic phosphate + choline. The enzyme catalyses an N-(acyl)-sphingosylphosphoethanolamine = an N-(acyl)-sphingosyl-1,3-cyclic phosphate + ethanolamine. It carries out the reaction a 1-acyl-sn-glycero-3-phosphocholine = a 1-acyl-sn-glycero-2,3-cyclic phosphate + choline. It catalyses the reaction a 1-acyl-sn-glycero-3-phosphoethanolamine = a 1-acyl-sn-glycero-2,3-cyclic phosphate + ethanolamine. Functionally, dermonecrotic toxins cleave the phosphodiester linkage between the phosphate and headgroup of certain phospholipids (sphingolipid and lysolipid substrates), forming an alcohol (often choline) and a cyclic phosphate. This toxin acts on sphingomyelin (SM) with low activity. It may also act on ceramide phosphoethanolamine (CPE), lysophosphatidylcholine (LPC) and lysophosphatidylethanolamine (LPE), but not on lysophosphatidylserine (LPS), and lysophosphatidylglycerol (LPG). It acts by transphosphatidylation, releasing exclusively cyclic phosphate products as second products. Induces hemolysis, dermonecrosis, and edema. Also induces platelet aggregation. The polypeptide is Dermonecrotic toxin LlSicTox-betaIA1 (Loxosceles laeta (South American recluse spider)).